Consider the following 346-residue polypeptide: Upstream stimulatory factor 2 (346 aa).

Disordered regions lie at residues 1–44 (MDML…PGAE) and 215–244 (APRT…NEVE). The span at 11–20 (ASSATAAAAA) shows a compositional bias: low complexity. The segment covering 226 to 244 (DGTRTPRDERRRAQHNEVE) has biased composition (basic and acidic residues). Residues 235–290 (RRRAQHNEVERRRRDKINNWIVQLSKIIPDCHADNSKTGASKGGILSKACDYIREL) enclose the bHLH domain. A leucine-zipper region spans residues 307–328 (LQMDNELLRQQIEELKNENALL).

As to quaternary structure, efficient DNA binding requires dimerization with another bHLH protein. Binds DNA as a homodimer or a heterodimer (USF1/USF2). Interacts with MAF.

It localises to the nucleus. Transcription factor that binds to a symmetrical DNA sequence (E-boxes) (5'-CACGTG-3') that is found in a variety of viral and cellular promoters. The sequence is that of Upstream stimulatory factor 2 (Usf2) from Mus musculus (Mouse).